A 90-amino-acid polypeptide reads, in one-letter code: UPF0367 protein Npun_R4552 (90 aa).

Belongs to the UPF0367 family.

The polypeptide is UPF0367 protein Npun_R4552 (Nostoc punctiforme (strain ATCC 29133 / PCC 73102)).